The sequence spans 50 residues: Photosystem II reaction center protein M (50 aa).

A helical membrane pass occupies residues 7–27 (GFIASLLFVGVPTIFLIGLFI).

It belongs to the PsbM family. In terms of assembly, PSII is composed of 1 copy each of membrane proteins PsbA, PsbB, PsbC, PsbD, PsbE, PsbF, PsbH, PsbI, PsbJ, PsbK, PsbL, PsbM, PsbT, PsbX, PsbY, Psb30/Ycf12, peripheral proteins PsbO, CyanoQ (PsbQ), PsbU, PsbV and a large number of cofactors. It forms dimeric complexes.

Its subcellular location is the cellular thylakoid membrane. One of the components of the core complex of photosystem II (PSII). PSII is a light-driven water:plastoquinone oxidoreductase that uses light energy to abstract electrons from H(2)O, generating O(2) and a proton gradient subsequently used for ATP formation. It consists of a core antenna complex that captures photons, and an electron transfer chain that converts photonic excitation into a charge separation. This subunit is found at the monomer-monomer interface. This chain is Photosystem II reaction center protein M, found in Prochlorococcus marinus (strain MIT 9312).